The sequence spans 185 residues: Ribosome-recycling factor (185 aa).

The protein belongs to the RRF family.

The protein localises to the cytoplasm. Functionally, responsible for the release of ribosomes from messenger RNA at the termination of protein biosynthesis. May increase the efficiency of translation by recycling ribosomes from one round of translation to another. The protein is Ribosome-recycling factor of Chloroflexus aurantiacus (strain ATCC 29364 / DSM 637 / Y-400-fl).